The primary structure comprises 1332 residues: DNA-directed RNA polymerase subunit beta'' (1332 aa).

Zn(2+)-binding residues include C220, C291, C298, and C301.

This sequence belongs to the RNA polymerase beta' chain family. RpoC2 subfamily. In plastids the minimal PEP RNA polymerase catalytic core is composed of four subunits: alpha, beta, beta', and beta''. When a (nuclear-encoded) sigma factor is associated with the core the holoenzyme is formed, which can initiate transcription. Zn(2+) is required as a cofactor.

It is found in the plastid. The protein resides in the chloroplast. It carries out the reaction RNA(n) + a ribonucleoside 5'-triphosphate = RNA(n+1) + diphosphate. DNA-dependent RNA polymerase catalyzes the transcription of DNA into RNA using the four ribonucleoside triphosphates as substrates. The protein is DNA-directed RNA polymerase subunit beta'' of Lotus japonicus (Lotus corniculatus var. japonicus).